The primary structure comprises 75 residues: uncharacterized protein (75 aa).

This is an uncharacterized protein from Saccharolobus islandicus (Sulfolobus islandicus).